The following is a 242-amino-acid chain: Glucosamine-6-phosphate deaminase (242 aa).

Catalysis depends on Asp-67, which acts as the Proton acceptor; for enolization step. The active-site For ring-opening step is Asn-137. The active-site Proton acceptor; for ring-opening step is His-139. The active-site For ring-opening step is the Glu-144.

It belongs to the glucosamine/galactosamine-6-phosphate isomerase family. NagB subfamily.

It catalyses the reaction alpha-D-glucosamine 6-phosphate + H2O = beta-D-fructose 6-phosphate + NH4(+). The protein operates within amino-sugar metabolism; N-acetylneuraminate degradation; D-fructose 6-phosphate from N-acetylneuraminate: step 5/5. Its function is as follows. Catalyzes the reversible isomerization-deamination of glucosamine 6-phosphate (GlcN6P) to form fructose 6-phosphate (Fru6P) and ammonium ion. This chain is Glucosamine-6-phosphate deaminase, found in Staphylococcus haemolyticus (strain JCSC1435).